Consider the following 769-residue polypeptide: MSFGDRIEDYEVYEILGKGGFASVYRARCLGSGTFVAIKMIDKKLMQSSGMANRVRQEVSIHSQLKHPSILELYTFFEDASHVYLVLELAENGELQRYLRETKKTFNEYEAASVLKQVVDGLLYLHSHHILHRDMSLANLLLTKQMTVKISDFGLATQLTRPDEKHMTLCGTPNYISPEVASRASHGLPADVWGLGCMLYTFLVGKPPFDTEGVKSTLTKVVMSNYTIPPYISSEARDLIDQLLKKNPAERIKLDQVLQHPFMRKATSYDSYRGGGTLASSDSGLVTMSSNGGSNRSNIPSSYGQDQRLQAPIIHQMPLRYQPISEHEYDFQESILPQQRPQSASHNKPTSDFFSGISNDPRTMAPSSPTKSPKKRLDIPPLNTARLLPNRHKTKNAILSIRSSGEVVLEFIKFKTRYKENRVVDVCRISSDGLRFVLYHPDGGKGVPIEEEPPDLPPGGADSIFSYENLPEKHWKKYQYAARFVQMVKAKTPKITYYSEKAKCQLMETLEDYEASFYSGTKIIKSPQDGVKFVDSSGIAIKTIASLSSSQNAEYQHFQQTLEHCLNIERALSAIQTGKTFPLIIGRRPANAPLTSSSSSSSSSTKENQLYSNISSPNTPQTPHQMPSFAMSTASHTSAGNPLTQRPVLSSKPVPANFSNVAMKKCTIAGVGTAVQLSQGVVQVQFLDGATLSLIPIEQGGGVTFSPAVGSPLQHYSTQDNDALLPASLREKIGQMPAILRELNAAPVPSIPFNFLEGSPRTPLTRFLR.

Positions 10–263 (YEVYEILGKG…LDQVLQHPFM (254 aa)) constitute a Protein kinase domain. ATP contacts are provided by residues 16–24 (LGKGGFASV) and K39. D134 (proton acceptor) is an active-site residue. Disordered regions lie at residues 280–304 (SSDS…SSYG), 337–380 (PQQR…LDIP), and 592–651 (APLT…VLSS). The span at 337-371 (PQQRPQSASHNKPTSDFFSGISNDPRTMAPSSPTK) shows a compositional bias: polar residues. The 118-residue stretch at 374–491 (KKRLDIPPLN…ARFVQMVKAK (118 aa)) folds into the Cryptic POLO box 1 (CPB1) domain. The 104-residue stretch at 492-595 (TPKITYYSEK…GRRPANAPLT (104 aa)) folds into the Cryptic POLO box 2 (CPB2) domain. Residues 605–648 (TKENQLYSNISSPNTPQTPHQMPSFAMSTASHTSAGNPLTQRPV) show a composition bias toward polar residues. Positions 662–745 (AMKKCTIAGV…MPAILRELNA (84 aa)) constitute a POLO box domain.

Belongs to the protein kinase superfamily. Ser/Thr protein kinase family. CDC5/Polo subfamily. In terms of assembly, homodimer. Ubiquitinated; leading to its degradation by the proteasome.

Its subcellular location is the cytoplasm. It is found in the cytoskeleton. The protein localises to the microtubule organizing center. It localises to the centrosome. The protein resides in the centriole. The enzyme catalyses L-seryl-[protein] + ATP = O-phospho-L-seryl-[protein] + ADP + H(+). It catalyses the reaction L-threonyl-[protein] + ATP = O-phospho-L-threonyl-[protein] + ADP + H(+). Its function is as follows. Serine/threonine-protein kinase that plays a central role in centriole duplication. Able to trigger procentriole formation on the surface of the mother centriole cylinder, leading to the recruitment of centriole biogenesis proteins. When overexpressed, it is able to induce centrosome amplification through the simultaneous generation of multiple procentrioles adjoining each parental centriole during S phase. The chain is Serine/threonine-protein kinase PLK4 (SAK) from Aedes aegypti (Yellowfever mosquito).